A 578-amino-acid chain; its full sequence is E3 ubiquitin-protein ligase Praja-1 (578 aa).

Residues 1-298 (MSHQERIASQ…KVPRRRRTMA (298 aa)) form a disordered region. Basic and acidic residues-rich tracts occupy residues 57 to 67 (DYSRYPPREYR) and 107 to 116 (KFKDDPEKGA). Over residues 151-163 (SKQNGSSASQISS) the composition is skewed to polar residues. The residue at position 231 (T231) is a Phosphothreonine. Basic and acidic residues-rich tracts occupy residues 243 to 264 (RWRD…RGRG) and 273 to 290 (RYAE…ADKV). S317 and S319 each carry phosphoserine. The segment at 332–397 (RSREQPQSSS…QASLEEGEIP (66 aa)) is disordered. A compositionally biased stretch (low complexity) spans 359–373 (AGAGSLASAGSNGSG). Residues 377 to 395 (EVQDPSLQEEEQASLEEGE) are compositionally biased toward acidic residues. The RING-type zinc-finger motif lies at 530 to 571 (CPICCSEYVKGEVATELPCHHYFHKPCVSIWLQKSGTCPVCR).

As to quaternary structure, binds ubiquitin-conjugating enzymes (E2s). Binds, in vitro and in vivo, the MAGE conserved domain of MAGED1. Binds weakly Necdin, in vitro. Interacts with UBE2D2. Post-translationally, substrate for E2-dependent ubiquitination. In terms of tissue distribution, expressed in brain, liver, kidney. Highest levels in brain where it is found in many regions including cortical and subcortical areas and in neurons of the amygdala. Weak expression also found in testis. Also expressed in developing embryo.

It carries out the reaction S-ubiquitinyl-[E2 ubiquitin-conjugating enzyme]-L-cysteine + [acceptor protein]-L-lysine = [E2 ubiquitin-conjugating enzyme]-L-cysteine + N(6)-ubiquitinyl-[acceptor protein]-L-lysine.. Its function is as follows. Has E2-dependent E3 ubiquitin-protein ligase activity. Ubiquitinates MAGED1 antigen leading to its subsequent degradation by proteasome. May be involved in protein sorting. The polypeptide is E3 ubiquitin-protein ligase Praja-1 (Pja1) (Mus musculus (Mouse)).